Reading from the N-terminus, the 150-residue chain is U1 small nuclear ribonucleoprotein C (150 aa).

The Matrin-type zinc-finger motif lies at 4-36 (YYCDYCKSYLTHDTMSVRKSHLQGRNHIKFYCD). Residues 66–132 (SDAKKSNGSS…GLPLPPPAVY (67 aa)) are disordered. The span at 80–92 (DIDKKENSSDHNK) shows a compositional bias: basic and acidic residues. Residues 103 to 112 (NDNDDDDDEM) show a composition bias toward acidic residues. Residues 115 to 130 (LPPPPNLSGLPLPPPA) are compositionally biased toward pro residues.

This sequence belongs to the U1 small nuclear ribonucleoprotein C family. In terms of assembly, U1 snRNP is composed of the 7 core Sm proteins B/B', D1, D2, D3, E, F and G that assemble in a heptameric protein ring on the Sm site of the small nuclear RNA to form the core snRNP, and at least 3 U1 snRNP-specific proteins U1-70K, U1-A and U1-C. U1-C interacts with U1 snRNA and the 5' splice-site region of the pre-mRNA.

It is found in the nucleus. In terms of biological role, component of the spliceosomal U1 snRNP, which is essential for recognition of the pre-mRNA 5' splice-site and the subsequent assembly of the spliceosome. U1-C is directly involved in initial 5' splice-site recognition for both constitutive and regulated alternative splicing. The interaction with the 5' splice-site seems to precede base-pairing between the pre-mRNA and the U1 snRNA. Stimulates commitment or early (E) complex formation by stabilizing the base pairing of the 5' end of the U1 snRNA and the 5' splice-site region. The polypeptide is U1 small nuclear ribonucleoprotein C (Candida albicans (strain SC5314 / ATCC MYA-2876) (Yeast)).